Reading from the N-terminus, the 525-residue chain is GMP synthase [glutamine-hydrolyzing] (525 aa).

The region spanning 9–207 is the Glutamine amidotransferase type-1 domain; it reads RILILDFGSQ…VRDICQCEAL (199 aa). Cysteine 86 (nucleophile) is an active-site residue. Residues histidine 181 and glutamate 183 contribute to the active site. The GMPS ATP-PPase domain maps to 208 to 400; that stretch reads WTPAKIIDDA…LGLPYDMLYR (193 aa). Position 235 to 241 (235 to 241) interacts with ATP; the sequence is SGGVDSS.

In terms of assembly, homodimer.

The catalysed reaction is XMP + L-glutamine + ATP + H2O = GMP + L-glutamate + AMP + diphosphate + 2 H(+). The protein operates within purine metabolism; GMP biosynthesis; GMP from XMP (L-Gln route): step 1/1. Catalyzes the synthesis of GMP from XMP. This is GMP synthase [glutamine-hydrolyzing] from Shigella boydii serotype 18 (strain CDC 3083-94 / BS512).